The chain runs to 169 residues: Der GTPase-activating protein YihI (169 aa).

2 disordered regions span residues 1-98 and 144-169; these read MKPS…PQAE and GLSYDDDEEEEEDEKQEDMMRLLRGN. Residues 10–19 show a composition bias toward basic residues; that stretch reads SKGHAKARRK. Residues 20–30 show a composition bias toward basic and acidic residues; the sequence is TREELDQEARD. Residues 31–40 show a composition bias toward basic residues; it reads RKRLKKRRGH. Positions 49-58 are enriched in polar residues; it reads GNTTSGSKGQ. Residues 147–159 show a composition bias toward acidic residues; it reads YDDDEEEEEDEKQ. The span at 160–169 shows a compositional bias: basic and acidic residues; the sequence is EDMMRLLRGN.

It belongs to the YihI family. Interacts with Der.

Its function is as follows. A GTPase-activating protein (GAP) that modifies Der/EngA GTPase function. May play a role in ribosome biogenesis. The protein is Der GTPase-activating protein YihI of Escherichia coli O6:K15:H31 (strain 536 / UPEC).